We begin with the raw amino-acid sequence, 555 residues long: Small ribosomal subunit protein uS3m (555 aa).

Positions 1 to 20 (MARKGNPISVRLGKNRSSDS) are disordered.

The protein belongs to the universal ribosomal protein uS3 family.

It localises to the mitochondrion. This is Small ribosomal subunit protein uS3m (RPS3) from Brassica napus (Rape).